We begin with the raw amino-acid sequence, 117 residues long: UPF0102 protein YE3728 (117 aa).

Belongs to the UPF0102 family.

This chain is UPF0102 protein YE3728, found in Yersinia enterocolitica serotype O:8 / biotype 1B (strain NCTC 13174 / 8081).